Here is a 384-residue protein sequence, read N- to C-terminus: MSLLTLIAGVAVGVTVVPRIVARRQRRAAYAAGMTVSQMLQHITSLSPMGVAVVDTFNDVVYSNDRAVELNVVRDRILDDRAWQAAQRVFETGQDVEVDLSPLKVANPGRSGISVRGKVRLLTDDDRRFAVVYIDDQSEHARMEATRRDFVANVSHELKTPVGAMSVLAEALLASADDPDTVRRFAEKMVAESHRLADMIGELIELSRLQGAERLPDLDAVDVDSIVSEAVSRHKVAADNSQISITTDAPTGYRVLGDEGLLVTAIANLVSNAIAYSPNGTDVSISRRKRGGNIEIAVTDRGIGIAKDDQERVFERFFRVDKARSRATGGTGLGLAIVKHVAANHNGSIRLWSQPGTGSTFTLSIPEYPDPESHSDEREDQRER.

Residues 153-369 enclose the Histidine kinase domain; the sequence is NVSHELKTPV…TFTLSIPEYP (217 aa). The residue at position 156 (His156) is a Phosphohistidine; by autocatalysis. The tract at residues 360–384 is disordered; sequence TFTLSIPEYPDPESHSDEREDQRER. Basic and acidic residues predominate over residues 371 to 384; it reads PESHSDEREDQRER.

Autophosphorylated.

The protein resides in the cell membrane. The catalysed reaction is ATP + protein L-histidine = ADP + protein N-phospho-L-histidine.. Its function is as follows. Member of the two-component regulatory system SenX3/RegX3 involved in stress response. The system is involved in phosphate starvation response. Probably exhibits a dual role as a phosphatase or a phosphodonor for the response regulator RegX3, depending upon phosphate availability. When environmental phosphate is abundant, SenX3 is required to maintain RegX3 in an unphosphorylated state, where it is unable to bind target DNA. Under conditions of phosphate limitation, SenX3 autophosphorylates and then transfers the phosphate group to RegX3. Probably does not itself sense phosphate concentrations, which may be relayed to SenX3 by the PstSCAB phosphate transporter system. In Mycolicibacterium smegmatis (strain ATCC 700084 / mc(2)155) (Mycobacterium smegmatis), this protein is Sensor-like histidine kinase SenX3.